The primary structure comprises 486 residues: Cardiolipin synthase A (486 aa).

Helical transmembrane passes span 3 to 23 and 38 to 58; these read TFYT…IAGV and MAWL…YLSL. 2 PLD phosphodiesterase domains span residues 219-246 and 399-426; these read MDLR…VDPR and EGGL…DMRS. Residues H224, K226, D231, H404, K406, and D411 contribute to the active site.

It belongs to the phospholipase D family. Cardiolipin synthase subfamily. ClsA sub-subfamily.

It localises to the cell inner membrane. The enzyme catalyses 2 a 1,2-diacyl-sn-glycero-3-phospho-(1'-sn-glycerol) = a cardiolipin + glycerol. Catalyzes the reversible phosphatidyl group transfer from one phosphatidylglycerol molecule to another to form cardiolipin (CL) (diphosphatidylglycerol) and glycerol. This Erwinia tasmaniensis (strain DSM 17950 / CFBP 7177 / CIP 109463 / NCPPB 4357 / Et1/99) protein is Cardiolipin synthase A.